The following is a 311-amino-acid chain: Ribosomal protein L11 methyltransferase (311 aa).

Positions 162, 183, 205, and 248 each coordinate S-adenosyl-L-methionine.

It belongs to the methyltransferase superfamily. PrmA family.

It is found in the cytoplasm. It catalyses the reaction L-lysyl-[protein] + 3 S-adenosyl-L-methionine = N(6),N(6),N(6)-trimethyl-L-lysyl-[protein] + 3 S-adenosyl-L-homocysteine + 3 H(+). Functionally, methylates ribosomal protein L11. This Bacillus subtilis (strain 168) protein is Ribosomal protein L11 methyltransferase.